We begin with the raw amino-acid sequence, 83 residues long: ATP synthase subunit c, chloroplastic (83 aa).

2 helical membrane-spanning segments follow: residues proline 3–glycine 23 and leucine 57–alanine 77.

It belongs to the ATPase C chain family. In terms of assembly, F-type ATPases have 2 components, F(1) - the catalytic core - and F(0) - the membrane proton channel. F(1) has five subunits: alpha(3), beta(3), gamma(1), delta(1), epsilon(1). F(0) has four main subunits: a(1), b(1), b'(1) and c(10-14). The alpha and beta chains form an alternating ring which encloses part of the gamma chain. F(1) is attached to F(0) by a central stalk formed by the gamma and epsilon chains, while a peripheral stalk is formed by the delta, b and b' chains.

The protein resides in the plastid. It localises to the chloroplast thylakoid membrane. Functionally, f(1)F(0) ATP synthase produces ATP from ADP in the presence of a proton or sodium gradient. F-type ATPases consist of two structural domains, F(1) containing the extramembraneous catalytic core and F(0) containing the membrane proton channel, linked together by a central stalk and a peripheral stalk. During catalysis, ATP synthesis in the catalytic domain of F(1) is coupled via a rotary mechanism of the central stalk subunits to proton translocation. Key component of the F(0) channel; it plays a direct role in translocation across the membrane. A homomeric c-ring of between 10-14 subunits forms the central stalk rotor element with the F(1) delta and epsilon subunits. The chain is ATP synthase subunit c, chloroplastic from Diacronema lutheri (Unicellular marine alga).